A 297-amino-acid chain; its full sequence is 33 kDa chaperonin (297 aa).

Cystine bridges form between C232–C234 and C266–C269.

It belongs to the HSP33 family. In terms of processing, under oxidizing conditions two disulfide bonds are formed involving the reactive cysteines. Under reducing conditions zinc is bound to the reactive cysteines and the protein is inactive.

The protein resides in the cytoplasm. Its function is as follows. Redox regulated molecular chaperone. Protects both thermally unfolding and oxidatively damaged proteins from irreversible aggregation. Plays an important role in the bacterial defense system toward oxidative stress. In Azotobacter vinelandii (strain DJ / ATCC BAA-1303), this protein is 33 kDa chaperonin.